The sequence spans 613 residues: Azole resistance protein 1 (613 aa).

The interval 1–38 (MKGEPKTYSMSDLSYYGEKAQQQNEKQQKQYVVRRNST) is disordered. Over 1 to 70 (MKGEPKTYSM…PKGFILYASL (70 aa)) the chain is Extracellular. A helical membrane pass occupies residues 71–91 (IALALSLFLAALDIMIVSTII). The Cytoplasmic portion of the chain corresponds to 92–102 (EEVAKQFGSYS). A helical transmembrane segment spans residues 103-123 (EIGWLFTGYSLPNALLALIWG). Over 124–134 (RIATPIGFKET) the chain is Extracellular. The chain crosses the membrane as a helical span at residues 135–155 (MLFAIVIFEIGSLISALANSM). Topologically, residues 156-163 (SMLIGGRV) are cytoplasmic. The chain crosses the membrane as a helical span at residues 164 to 184 (IAGVGGCGIQSLSFVIGSTLV). The Extracellular portion of the chain corresponds to 185 to 189 (EESQR). Residues 190–210 (GILIAVLSCSFAIASVVGPFL) form a helical membrane-spanning segment. The Cytoplasmic portion of the chain corresponds to 211–221 (GGVFTSSVTWR). A helical membrane pass occupies residues 222-242 (WCFYVNLPIGGLAFFLFLFFY). Over 243-298 (NPGLSTFQETMDNIRKFPSQFIEIVRNVAYHLLKIKGFSKLNGWRKPFMELIFMYD) the chain is Extracellular. Residues 299–319 (IIEFVFCSAGFTCILLAFTFG) traverse the membrane as a helical segment. Over 320–329 (GNRYAWNSAS) the chain is Cytoplasmic. A helical membrane pass occupies residues 330–350 (IIILFIIGIVLVVLAGIYDFL). Over 351-375 (VFPKFNIVKATPHYQPLMSWTNIKK) the chain is Extracellular. The helical transmembrane segment at 376-396 (PGIFTVNIALFLTCAGYISQF) threads the bilayer. The Cytoplasmic segment spans residues 397-414 (TYIVQYFQLIYNDSAWRA). A helical membrane pass occupies residues 415–435 (AVHLVACIISTVVTAILCGAI). Over 436-443 (TDKTRQIK) the chain is Extracellular. A helical transmembrane segment spans residues 444–464 (PIIVISSIFGVVGAGILTLLN). Over 465–472 (NNANNSAH) the chain is Cytoplasmic. The helical transmembrane segment at 473 to 493 (IGLLILPGVAFGGLAQSSMLA) threads the bilayer. Topologically, residues 494-581 (SQIQLDKKSP…SKLGNIISES (88 aa)) are extracellular. A helical membrane pass occupies residues 582–602 (LTDVFYMALGFYALSLIFAVF). Residues 603–613 (ASNKKVTASLR) lie on the Cytoplasmic side of the membrane.

Belongs to the major facilitator superfamily.

The protein resides in the cell membrane. Its function is as follows. Transporter protein required for adaptation to high stress imposed by low-chain organic acids, in particular by acetic acid, and for resistance to azoles, especially to ketoconazole and fluconazole. This chain is Azole resistance protein 1 (AZR1), found in Saccharomyces cerevisiae (strain ATCC 204508 / S288c) (Baker's yeast).